The chain runs to 253 residues: UPF0174 protein jhp_1494 (253 aa).

Belongs to the UPF0174 family.

The protein is UPF0174 protein jhp_1494 of Helicobacter pylori (strain J99 / ATCC 700824) (Campylobacter pylori J99).